A 277-amino-acid polypeptide reads, in one-letter code: Phosphate import ATP-binding protein PstB 2 (277 aa).

An ABC transporter domain is found at 31–272; that stretch reads IEVPGLNLFY…PAKKQTEDYI (242 aa). ATP is bound at residue 63–70; it reads GPSGCGKS.

Belongs to the ABC transporter superfamily. Phosphate importer (TC 3.A.1.7) family. As to quaternary structure, the complex is composed of two ATP-binding proteins (PstB), two transmembrane proteins (PstC and PstA) and a solute-binding protein (PstS).

Its subcellular location is the cell inner membrane. It carries out the reaction phosphate(out) + ATP + H2O = ADP + 2 phosphate(in) + H(+). Functionally, part of the ABC transporter complex PstSACB involved in phosphate import. Responsible for energy coupling to the transport system. The polypeptide is Phosphate import ATP-binding protein PstB 2 (Pseudomonas syringae pv. syringae (strain B728a)).